Reading from the N-terminus, the 469-residue chain is 3-isopropylmalate dehydratase large subunit (469 aa).

[4Fe-4S] cluster contacts are provided by Cys347, Cys408, and Cys411.

Belongs to the aconitase/IPM isomerase family. LeuC type 1 subfamily. Heterodimer of LeuC and LeuD. [4Fe-4S] cluster serves as cofactor.

It catalyses the reaction (2R,3S)-3-isopropylmalate = (2S)-2-isopropylmalate. It functions in the pathway amino-acid biosynthesis; L-leucine biosynthesis; L-leucine from 3-methyl-2-oxobutanoate: step 2/4. In terms of biological role, catalyzes the isomerization between 2-isopropylmalate and 3-isopropylmalate, via the formation of 2-isopropylmaleate. In Haemophilus influenzae (strain 86-028NP), this protein is 3-isopropylmalate dehydratase large subunit.